A 377-amino-acid polypeptide reads, in one-letter code: MSNGIVIIGSGFAARQLVKNIRKQDATIPLTLIAADSMDEYNKPDLSHVISQGQRADDLTRQTAGEFAEQFNLHLFPQTWVTDIDAEARVVKSQNNQWQYDKLVLATGASAFVPPVPGRELMLTLNSQQEYRACETQLRDARRVLIVGGGLIGSELAMDFCRAGKAVTLIDNAASILASLMPPEVSSRLQHRLTEMGVHLLLKSQLQGLEKTDSGIQATLDRQRNIEVDAVIAATGLRPETALARRAGLTINRGVCVDSYLQTSNTDIYALGDCAEINGQVLPFLQPIQLSAMVLAKNLLGNNTPLKLPAMLVKIKTPELPLHLAGETQRQDLRWQINTERQGMVARGVDDADQLRAFVVSEDRMKEAFGLLKTLPM.

It belongs to the FAD-dependent oxidoreductase family. It depends on FAD as a cofactor.

Its subcellular location is the cytoplasm. The catalysed reaction is 2 reduced [nitric oxide reductase rubredoxin domain] + NAD(+) + H(+) = 2 oxidized [nitric oxide reductase rubredoxin domain] + NADH. It participates in nitrogen metabolism; nitric oxide reduction. Its function is as follows. One of at least two accessory proteins for anaerobic nitric oxide (NO) reductase. Reduces the rubredoxin moiety of NO reductase. The protein is Nitric oxide reductase FlRd-NAD(+) reductase of Escherichia coli (strain K12 / MC4100 / BW2952).